We begin with the raw amino-acid sequence, 433 residues long: UDP-N-acetylglucosamine 1-carboxyvinyltransferase (433 aa).

A phosphoenolpyruvate-binding site is contributed by 34–35 (KN). Arg-104 lines the UDP-N-acetyl-alpha-D-glucosamine pocket. Cys-128 serves as the catalytic Proton donor. Residue Cys-128 is modified to 2-(S-cysteinyl)pyruvic acid O-phosphothioketal. UDP-N-acetyl-alpha-D-glucosamine contacts are provided by Asp-320 and Ile-342.

This sequence belongs to the EPSP synthase family. MurA subfamily.

The protein localises to the cytoplasm. The enzyme catalyses phosphoenolpyruvate + UDP-N-acetyl-alpha-D-glucosamine = UDP-N-acetyl-3-O-(1-carboxyvinyl)-alpha-D-glucosamine + phosphate. It functions in the pathway cell wall biogenesis; peptidoglycan biosynthesis. Functionally, cell wall formation. Adds enolpyruvyl to UDP-N-acetylglucosamine. This chain is UDP-N-acetylglucosamine 1-carboxyvinyltransferase, found in Parasynechococcus marenigrum (strain WH8102).